The sequence spans 367 residues: Protein P39 (367 aa).

2 coiled-coil regions span residues 165–202 and 235–308; these read REGEEINILRKEALELQKQVTEQKAVVAELRLQISKQQ and EMIE…SDRL.

In terms of biological role, might be involved in virion assembly and vector-mediated transmission of the virus. This chain is Protein P39, found in Peanut clump virus (isolate 87/TGTA2) (PCV).